A 526-amino-acid polypeptide reads, in one-letter code: Reticulocyte-binding protein homolog 5 (526 aa).

A signal peptide spans 1–24 (MIRIKKKLILTIIYIHLFILNRLS). The interval 33–51 (KNQENNLTLLPIKSTEEEK) is mediates interaction with human BSG. Asparagine 38 and asparagine 214 each carry an N-linked (GlcNAc...) asparagine glycan. Disulfide bonds link cysteine 224–cysteine 317 and cysteine 345–cysteine 351. Positions 259-279 (EIDDKSEETDDETEEVEDSIQ) are enriched in acidic residues. The interval 259-294 (EIDDKSEETDDETEEVEDSIQDTDSNHTPSNKKKND) is disordered. Asparagine 297 is a glycosylation site (N-linked (GlcNAc...) asparagine).

Forms a complex composed of RH5, P113 and human BSG/basigin; the complex bridges the merozoite and host erythrocyte membranes. Within the complex, interacts (via C-terminus) with human BSG/basigin isoform 2 (via the extracellular domain); the interaction is independent of BSG glycosylation status. Weakly interacts with P.troglodytes BSG but not with G.gorilla BSG. Also, interacts (via N-terminus) with P113; the interaction tethers RH5 to the merozoite membrane. Component of the PfRH5 adhesion complex composed of 1 copy of CyRPA, RH5 and RIPR; the complex is formed during merozoite invasion of host erythrocytes specifically at the interface between the parasite and host membranes. Within the complex, interacts with CyRPA. CyRPA recruits RIPR to the RH5-P113-BSG complex; the formation of the PfRH5 adhesion complex increases the affinity of RH5 for BSG and probably leads to the release of RH5 from P113 while maintaining the interaction of the PfRH5 adhesion complex with BSG. In terms of processing, cleaved into a 45kDa form during merozoite invasion of host erythrocyte.

The protein resides in the secreted. It is found in the cytoplasmic vesicle. It localises to the secretory vesicle. The protein localises to the rhoptry lumen. Its subcellular location is the host cell membrane. Its function is as follows. Essential for the invasion of host erythrocytes by blood stage merozoites. By binding P113 at the surface of the merozoite and human BSG/basigin on the erythrocyte membrane, leads to the establishment of a tight junction between the merozoite and host erythrocyte membranes. In addition, the interaction with BSG results in BSG dimerization which triggers an increase in intracellular Ca(2+) in the erythrocyte. This essential step leads to a rearrangement of the erythrocyte cytoskeleton required for the merozoite invasion. This is Reticulocyte-binding protein homolog 5 from Plasmodium falciparum (isolate 3D7).